A 536-amino-acid chain; its full sequence is Glutamate--tRNA ligase, mitochondrial (536 aa).

48-50 contacts L-glutamate; sequence RFA. Residues 53 to 61 carry the 'HIGH' region motif; that stretch reads PTGFLHLGS. An ATP-binding site is contributed by His-58. Residues Glu-84, 235–239, and Arg-253 each bind L-glutamate; that span reads YHLAN. Residues Glu-256 and 291 to 295 contribute to the ATP site; that span reads KLSKR. The short motif at 291–295 is the 'KMSKS' region element; it reads KLSKR.

It belongs to the class-I aminoacyl-tRNA synthetase family. Glutamate--tRNA ligase type 1 subfamily.

It is found in the mitochondrion matrix. It catalyses the reaction tRNA(Glu) + L-glutamate + ATP = L-glutamyl-tRNA(Glu) + AMP + diphosphate. Functionally, catalyzes the attachment of glutamate to tRNA(Glu) in a two-step reaction: glutamate is first activated by ATP to form Glu-AMP and then transferred to the acceptor end of tRNA(Glu). The polypeptide is Glutamate--tRNA ligase, mitochondrial (MSE1) (Saccharomyces cerevisiae (strain ATCC 204508 / S288c) (Baker's yeast)).